The following is a 235-amino-acid chain: Large ribosomal subunit protein uL1c (235 aa).

The protein belongs to the universal ribosomal protein uL1 family. Part of the 50S ribosomal subunit.

Its subcellular location is the plastid. It is found in the chloroplast. Functionally, binds directly to 23S rRNA. Might be involved in E site tRNA release (Potential). The protein is Large ribosomal subunit protein uL1c (rpl1) of Gracilaria tenuistipitata var. liui (Red alga).